Consider the following 138-residue polypeptide: Regulator of ribonuclease activity B (138 aa).

Residues 111–138 (WGTYFEDPNGEEGDDDDYVDEDDDGVRH) form a disordered region. Residues 118–138 (PNGEEGDDDDYVDEDDDGVRH) are compositionally biased toward acidic residues.

This sequence belongs to the RraB family. Interacts with the C-terminal region of Rne.

It is found in the cytoplasm. Functionally, globally modulates RNA abundance by binding to RNase E (Rne) and regulating its endonucleolytic activity. Can modulate Rne action in a substrate-dependent manner by altering the composition of the degradosome. This Salmonella typhi protein is Regulator of ribonuclease activity B.